The following is a 538-amino-acid chain: Histone-arginine methyltransferase CARMER (538 aa).

Residues 148–457 form the SAM-dependent MTase PRMT-type domain; it reads ASQYFQFYGY…QSYDVTIDLH (310 aa). S-adenosyl-L-methionine is bound by residues Gln-161, Arg-170, Gly-194, Glu-216, Glu-245, and Thr-273. Asymmetric dimethylarginine; by autocatalysis is present on Arg-508.

Belongs to the class I-like SAM-binding methyltransferase superfamily. Protein arginine N-methyltransferase family. As to quaternary structure, homodimer. Post-translationally, the dimethylated protein is the major form.

Its subcellular location is the cytoplasm. It is found in the nucleus. The catalysed reaction is L-arginyl-[protein] + 2 S-adenosyl-L-methionine = N(omega),N(omega)-dimethyl-L-arginyl-[protein] + 2 S-adenosyl-L-homocysteine + 2 H(+). Functionally, methylates (mono- and asymmetric dimethylation) the guanidino nitrogens of arginyl residues in proteins. May methylate histone H3 at 'Arg-17' and activate transcription via chromatin remodeling. The polypeptide is Histone-arginine methyltransferase CARMER (Art4) (Drosophila virilis (Fruit fly)).